We begin with the raw amino-acid sequence, 1399 residues long: DNA-directed RNA polymerase subunit beta' (1399 aa).

Zn(2+)-binding residues include C70, C72, C85, and C88. Residues D460, D462, and D464 each coordinate Mg(2+). Zn(2+) is bound by residues C814, C888, C895, and C898.

It belongs to the RNA polymerase beta' chain family. As to quaternary structure, the RNAP catalytic core consists of 2 alpha, 1 beta, 1 beta' and 1 omega subunit. When a sigma factor is associated with the core the holoenzyme is formed, which can initiate transcription. Mg(2+) is required as a cofactor. The cofactor is Zn(2+).

It carries out the reaction RNA(n) + a ribonucleoside 5'-triphosphate = RNA(n+1) + diphosphate. Its function is as follows. DNA-dependent RNA polymerase catalyzes the transcription of DNA into RNA using the four ribonucleoside triphosphates as substrates. The polypeptide is DNA-directed RNA polymerase subunit beta' (Pseudomonas syringae pv. syringae (strain B728a)).